Here is a 213-residue protein sequence, read N- to C-terminus: Large ribosomal subunit protein uL3 (213 aa).

Gln-151 carries the post-translational modification N5-methylglutamine.

The protein belongs to the universal ribosomal protein uL3 family. Part of the 50S ribosomal subunit. Forms a cluster with proteins L14 and L19. Post-translationally, methylated by PrmB.

Its function is as follows. One of the primary rRNA binding proteins, it binds directly near the 3'-end of the 23S rRNA, where it nucleates assembly of the 50S subunit. The protein is Large ribosomal subunit protein uL3 of Rhizobium leguminosarum bv. trifolii (strain WSM2304).